The chain runs to 227 residues: ATP synthase subunit a (227 aa).

Transmembrane regions (helical) follow at residues 14 to 34 (LLNI…FVSF), 69 to 89 (WVVL…IGLF), 98 to 118 (QLSM…VYGF), 137 to 157 (LLVP…PLAL), 169 to 189 (HLLM…SVML), and 205 to 223 (IAVA…TLYL).

It belongs to the ATPase A chain family. As to quaternary structure, F-type ATPases have 2 components, CF(1) - the catalytic core - and CF(0) - the membrane proton channel. CF(1) has five subunits: alpha(3), beta(3), gamma(1), delta(1), epsilon(1). CF(0) has three main subunits: a, b and c.

Its subcellular location is the mitochondrion inner membrane. In terms of biological role, mitochondrial membrane ATP synthase (F(1)F(0) ATP synthase or Complex V) produces ATP from ADP in the presence of a proton gradient across the membrane which is generated by electron transport complexes of the respiratory chain. F-type ATPases consist of two structural domains, F(1) - containing the extramembraneous catalytic core and F(0) - containing the membrane proton channel, linked together by a central stalk and a peripheral stalk. During catalysis, ATP synthesis in the catalytic domain of F(1) is coupled via a rotary mechanism of the central stalk subunits to proton translocation. Key component of the proton channel; it may play a direct role in the translocation of protons across the membrane. In Branchiostoma floridae (Florida lancelet), this protein is ATP synthase subunit a (ATP6).